The chain runs to 1225 residues: DNA-directed RNA polymerase subunit beta' (1225 aa).

Cys-60, Cys-62, Cys-75, and Cys-78 together coordinate Zn(2+). 3 residues coordinate Mg(2+): Asp-450, Asp-452, and Asp-454. Zn(2+)-binding residues include Cys-818, Cys-892, Cys-899, and Cys-902.

This sequence belongs to the RNA polymerase beta' chain family. As to quaternary structure, the RNAP catalytic core consists of 2 alpha, 1 beta, 1 beta' and 1 omega subunit. When a sigma factor is associated with the core the holoenzyme is formed, which can initiate transcription. Requires Mg(2+) as cofactor. Zn(2+) is required as a cofactor.

It catalyses the reaction RNA(n) + a ribonucleoside 5'-triphosphate = RNA(n+1) + diphosphate. Functionally, DNA-dependent RNA polymerase catalyzes the transcription of DNA into RNA using the four ribonucleoside triphosphates as substrates. This is DNA-directed RNA polymerase subunit beta' from Streptococcus pneumoniae (strain P1031).